The chain runs to 237 residues: Phosphoribosylaminoimidazole-succinocarboxamide synthase (237 aa).

The protein belongs to the SAICAR synthetase family.

The enzyme catalyses 5-amino-1-(5-phospho-D-ribosyl)imidazole-4-carboxylate + L-aspartate + ATP = (2S)-2-[5-amino-1-(5-phospho-beta-D-ribosyl)imidazole-4-carboxamido]succinate + ADP + phosphate + 2 H(+). Its pathway is purine metabolism; IMP biosynthesis via de novo pathway; 5-amino-1-(5-phospho-D-ribosyl)imidazole-4-carboxamide from 5-amino-1-(5-phospho-D-ribosyl)imidazole-4-carboxylate: step 1/2. This Psychrobacter arcticus (strain DSM 17307 / VKM B-2377 / 273-4) protein is Phosphoribosylaminoimidazole-succinocarboxamide synthase.